Consider the following 101-residue polypeptide: Small ribosomal subunit protein uS14 (101 aa).

The protein belongs to the universal ribosomal protein uS14 family. As to quaternary structure, part of the 30S ribosomal subunit. Contacts proteins S3 and S10.

Functionally, binds 16S rRNA, required for the assembly of 30S particles and may also be responsible for determining the conformation of the 16S rRNA at the A site. This Anaplasma phagocytophilum (strain HZ) protein is Small ribosomal subunit protein uS14.